The following is a 525-amino-acid chain: Lysine--tRNA ligase (525 aa).

Mg(2+) is bound by residues E419 and E426.

It belongs to the class-II aminoacyl-tRNA synthetase family. As to quaternary structure, homodimer. The cofactor is Mg(2+).

The protein resides in the cytoplasm. The catalysed reaction is tRNA(Lys) + L-lysine + ATP = L-lysyl-tRNA(Lys) + AMP + diphosphate. This chain is Lysine--tRNA ligase (lysS), found in Deinococcus radiodurans (strain ATCC 13939 / DSM 20539 / JCM 16871 / CCUG 27074 / LMG 4051 / NBRC 15346 / NCIMB 9279 / VKM B-1422 / R1).